We begin with the raw amino-acid sequence, 220 residues long: Protein DGCR6 (220 aa).

Residues Lys76–Val142 are a coiled coil.

The protein belongs to the gonadal family. As to expression, found in all tissues examined with highest expression in liver, heart and skeletal muscle. Lower levels in pancreas and placenta. Weak expression in brain.

It localises to the nucleus. Functionally, may play a role in neural crest cell migration into the third and fourth pharyngeal pouches. The chain is Protein DGCR6 (DGCR6) from Homo sapiens (Human).